The primary structure comprises 458 residues: V-type ATP synthase beta chain (458 aa).

The protein belongs to the ATPase alpha/beta chains family.

Its function is as follows. Produces ATP from ADP in the presence of a proton gradient across the membrane. The V-type beta chain is a regulatory subunit. This is V-type ATP synthase beta chain from Fusobacterium nucleatum subsp. nucleatum (strain ATCC 25586 / DSM 15643 / BCRC 10681 / CIP 101130 / JCM 8532 / KCTC 2640 / LMG 13131 / VPI 4355).